The following is a 174-amino-acid chain: Adenine phosphoribosyltransferase (174 aa).

It belongs to the purine/pyrimidine phosphoribosyltransferase family. As to quaternary structure, homodimer.

It localises to the cytoplasm. It carries out the reaction AMP + diphosphate = 5-phospho-alpha-D-ribose 1-diphosphate + adenine. It participates in purine metabolism; AMP biosynthesis via salvage pathway; AMP from adenine: step 1/1. Its function is as follows. Catalyzes a salvage reaction resulting in the formation of AMP, that is energically less costly than de novo synthesis. The protein is Adenine phosphoribosyltransferase of Agathobacter rectalis (strain ATCC 33656 / DSM 3377 / JCM 17463 / KCTC 5835 / VPI 0990) (Eubacterium rectale).